The primary structure comprises 302 residues: Ornithine carbamoyltransferase (302 aa).

Carbamoyl phosphate contacts are provided by residues 52-55 (STRT), Gln-79, Arg-103, and 130-133 (HPCQ). Residues Asn-161, Asp-221, and 225–226 (SM) contribute to the L-ornithine site. Residues 261-262 (CL) and Arg-289 each bind carbamoyl phosphate.

It belongs to the aspartate/ornithine carbamoyltransferase superfamily. OTCase family.

The protein localises to the cytoplasm. The catalysed reaction is carbamoyl phosphate + L-ornithine = L-citrulline + phosphate + H(+). The protein operates within amino-acid biosynthesis; L-arginine biosynthesis; L-arginine from L-ornithine and carbamoyl phosphate: step 1/3. Functionally, reversibly catalyzes the transfer of the carbamoyl group from carbamoyl phosphate (CP) to the N(epsilon) atom of ornithine (ORN) to produce L-citrulline. The protein is Ornithine carbamoyltransferase of Syntrophotalea carbinolica (strain DSM 2380 / NBRC 103641 / GraBd1) (Pelobacter carbinolicus).